The sequence spans 177 residues: tRNA (cytidine(56)-2'-O)-methyltransferase (177 aa).

S-adenosyl-L-methionine is bound by residues leucine 84 and 109-113 (GAEKV).

This sequence belongs to the aTrm56 family. As to quaternary structure, homodimer.

The protein localises to the cytoplasm. It catalyses the reaction cytidine(56) in tRNA + S-adenosyl-L-methionine = 2'-O-methylcytidine(56) in tRNA + S-adenosyl-L-homocysteine + H(+). Its function is as follows. Specifically catalyzes the AdoMet-dependent 2'-O-ribose methylation of cytidine at position 56 in tRNAs. The protein is tRNA (cytidine(56)-2'-O)-methyltransferase of Methanosarcina mazei (strain ATCC BAA-159 / DSM 3647 / Goe1 / Go1 / JCM 11833 / OCM 88) (Methanosarcina frisia).